Reading from the N-terminus, the 381-residue chain is 3-hydroxyisobutyryl-CoA hydrolase, mitochondrial (381 aa).

The N-terminal 25 residues, 1–25 (MDRLLTISNHIGKNIRQFSTSTEEV), are a transit peptide targeting the mitochondrion. Glu-116, Gly-141, Glu-164, and Asp-172 together coordinate substrate.

This sequence belongs to the enoyl-CoA hydratase/isomerase family.

The protein localises to the mitochondrion. It carries out the reaction 3-hydroxy-2-methylpropanoyl-CoA + H2O = 3-hydroxy-2-methylpropanoate + CoA + H(+). Its pathway is amino-acid degradation; L-valine degradation. In terms of biological role, hydrolyzes 3-hydroxyisobutyryl-CoA (HIBYL-CoA), a saline catabolite. The chain is 3-hydroxyisobutyryl-CoA hydrolase, mitochondrial (hibch) from Dictyostelium discoideum (Social amoeba).